The chain runs to 238 residues: tRNA1(Val) (adenine(37)-N6)-methyltransferase (238 aa).

It belongs to the methyltransferase superfamily. tRNA (adenine-N(6)-)-methyltransferase family.

Its subcellular location is the cytoplasm. It catalyses the reaction adenosine(37) in tRNA1(Val) + S-adenosyl-L-methionine = N(6)-methyladenosine(37) in tRNA1(Val) + S-adenosyl-L-homocysteine + H(+). Functionally, specifically methylates the adenine in position 37 of tRNA(1)(Val) (anticodon cmo5UAC). The polypeptide is tRNA1(Val) (adenine(37)-N6)-methyltransferase (Shewanella baltica (strain OS195)).